The following is a 253-amino-acid chain: Cyclin-C1-2 (253 aa).

The protein belongs to the cyclin family. Cyclin C subfamily.

In Arabidopsis thaliana (Mouse-ear cress), this protein is Cyclin-C1-2 (CYCC1-2).